A 249-amino-acid polypeptide reads, in one-letter code: NH(3)-dependent NAD(+) synthetase (249 aa).

D34 provides a ligand contact to Mg(2+). R110 contributes to the deamido-NAD(+) binding site. T130 contacts ATP. Residue E135 participates in Mg(2+) binding. Deamido-NAD(+) is bound by residues K143 and D150. K159 and S181 together coordinate ATP. 232 to 233 is a deamido-NAD(+) binding site; that stretch reads HK.

The protein belongs to the NAD synthetase family. As to quaternary structure, homodimer.

It carries out the reaction deamido-NAD(+) + NH4(+) + ATP = AMP + diphosphate + NAD(+) + H(+). It participates in cofactor biosynthesis; NAD(+) biosynthesis; NAD(+) from deamido-NAD(+) (ammonia route): step 1/1. Catalyzes the ATP-dependent amidation of deamido-NAD to form NAD. Uses ammonia as a nitrogen source. The chain is NH(3)-dependent NAD(+) synthetase from Picrophilus torridus (strain ATCC 700027 / DSM 9790 / JCM 10055 / NBRC 100828 / KAW 2/3).